The following is a 283-amino-acid chain: Formamidopyrimidine-DNA glycosylase (283 aa).

The Schiff-base intermediate with DNA role is filled by Pro2. The active-site Proton donor is the Glu3. Lys61 serves as the catalytic Proton donor; for beta-elimination activity. Positions 94, 113, and 159 each coordinate DNA. Residues 245–279 (DAYGREGESCRRCGAVMRREKFMNRSSFYCPKCQP) form an FPG-type zinc finger. The Proton donor; for delta-elimination activity role is filled by Arg269.

Belongs to the FPG family. Monomer. Zn(2+) serves as cofactor.

The catalysed reaction is Hydrolysis of DNA containing ring-opened 7-methylguanine residues, releasing 2,6-diamino-4-hydroxy-5-(N-methyl)formamidopyrimidine.. It carries out the reaction 2'-deoxyribonucleotide-(2'-deoxyribose 5'-phosphate)-2'-deoxyribonucleotide-DNA = a 3'-end 2'-deoxyribonucleotide-(2,3-dehydro-2,3-deoxyribose 5'-phosphate)-DNA + a 5'-end 5'-phospho-2'-deoxyribonucleoside-DNA + H(+). In terms of biological role, involved in base excision repair of DNA damaged by oxidation or by mutagenic agents. Acts as a DNA glycosylase that recognizes and removes damaged bases. Has a preference for oxidized purines, such as 7,8-dihydro-8-oxoguanine (8-oxoG). Has AP (apurinic/apyrimidinic) lyase activity and introduces nicks in the DNA strand. Cleaves the DNA backbone by beta-delta elimination to generate a single-strand break at the site of the removed base with both 3'- and 5'-phosphates. This chain is Formamidopyrimidine-DNA glycosylase, found in Mycolicibacterium paratuberculosis (strain ATCC BAA-968 / K-10) (Mycobacterium paratuberculosis).